Consider the following 433-residue polypeptide: Ascus wall endo-1,3-alpha-glucanase (433 aa).

This sequence belongs to the glycosyl hydrolase 71 family.

The protein localises to the ascus epiplasm. The catalysed reaction is Endohydrolysis of (1-&gt;3)-alpha-D-glucosidic linkages in isolichenin, pseudonigeran and nigeran.. Its function is as follows. Promotes the release of ascospores from asci by hydrolyzing 1,3-alpha-glucan in the ascus wall. The sequence is that of Ascus wall endo-1,3-alpha-glucanase from Schizosaccharomyces pombe (strain 972 / ATCC 24843) (Fission yeast).